A 530-amino-acid chain; its full sequence is MARAGWTSPVPLCVCLLLTCGFAEAGKLLVVPMDGSHWFTMQSVVEKLILRGHEVVVVMPEVSWQLERSLNCTVKTYSTSYTLEDQNREFMVFAHAQWKAQAQSIFSLLMSSSSGFLDLFFSHCRSLFNDRKLVEYLKESSFDAVFLDPFDTCGLIVAKYFSLPSVVFTRGIFCHHLEEGAQCPAPLSYVPNDLLGFSDAMTFKERVWNHIVHLEDHLFCQYLFRNALEIASEILQTPVTAYDLYSHTSIWLLRTDFVLDYPKPVMPNMIFIGGINCHQGKPLPMEFEAYINASGEHGIVVFSLGSMVSEIPEKKAMAIADALGKIPQTVLWRYTGTRPSNLANNTILVKWLPQNDLLGHPMTRAFITHAGSHGVYESICNGVPMVMMPLFGDQMDNAKRMETKGAGVTLNVLEMTSEDLENALKAVINDKSYKENIMRLSSLHKDRPVEPLDLAVFWVEFVMRHKGAPHLRPAAHDLTWYQYHSLDVIGFLLAVVLTVAFITFKCCAYGYRKCLGKKGRVKKAHKSKTH.

The signal sequence occupies residues 1 to 25 (MARAGWTSPVPLCVCLLLTCGFAEA). Asn71, Asn292, and Asn344 each carry an N-linked (GlcNAc...) asparagine glycan. A helical membrane pass occupies residues 488–504 (VIGFLLAVVLTVAFITF).

It belongs to the UDP-glycosyltransferase family. Homodimer. Homooligomer. Interacts with UGT1A1, UGT1A3, UGT1A4, UGT1A6, UGT1A7, UGT1A8 and UGT1A9 to form heterodimers. Isoform 1 interacts with isoform 2/i2 suggesting that oligomerization is involved in negative regulation of transferase activity by isoform 2. Isoform 1 also interacts with respective i2 isoforms of UGT1A1, UGT1A3, UGT1A4, UGT1A6, UGT1A7, UGT1A8 and UGT1A9. In terms of tissue distribution, liver and colon. Isoform 1 and isoform 2 are expressed in colon, esophagus and small intestine; isoform 2 but not isoform 1 is expressed in liver or kidney.

It is found in the endoplasmic reticulum membrane. The catalysed reaction is glucuronate acceptor + UDP-alpha-D-glucuronate = acceptor beta-D-glucuronoside + UDP + H(+). The enzyme catalyses 17beta-estradiol + UDP-alpha-D-glucuronate = 17beta-estradiol 3-O-(beta-D-glucuronate) + UDP + H(+). It carries out the reaction 17beta-estradiol + UDP-alpha-D-glucuronate = 17beta-estradiol 17-O-(beta-D-glucuronate) + UDP + H(+). It catalyses the reaction 17alpha-estradiol + UDP-alpha-D-glucuronate = 17alpha-estradiol 3-O-(beta-D-glucuronate) + UDP + H(+). The catalysed reaction is 16alpha,17beta-estriol + UDP-alpha-D-glucuronate = 16alpha,17beta-estriol 3-O-(beta-D-glucuronate) + UDP + H(+). The enzyme catalyses 16beta,17beta-estriol + UDP-alpha-D-glucuronate = 16beta,17beta-estriol 3-O-(beta-D-glucuronate) + UDP + H(+). It carries out the reaction 16alpha,17alpha-estriol + UDP-alpha-D-glucuronate = 16alpha,17alpha-estriol 3-O-(beta-D-glucuronate) + UDP + H(+). It catalyses the reaction 16alpha-hydroxyestrone + UDP-alpha-D-glucuronate = 16alpha-hydroxyestrone 3-O-(beta-D-glucuronate) + UDP + H(+). The catalysed reaction is estrone + UDP-alpha-D-glucuronate = estrone 3-O-(beta-D-glucuronate) + UDP + H(+). The enzyme catalyses prunetin + UDP-alpha-D-glucuronate = prunetin-4'-O-beta-D-glucuronide + UDP. It carries out the reaction (5Z,8Z,11Z,14Z)-eicosatetraenoate + UDP-alpha-D-glucuronate = O-[(5Z),(8Z),(11Z),(14Z)-eicosatetraenoyl]-beta-D-glucuronate + UDP. It catalyses the reaction 15-hydroxy-(5Z,8Z,11Z,13E)-eicosatetraenoate + UDP-alpha-D-glucuronate = 15-O-(beta-D-glucuronosyl)-(5Z,8Z,11Z,14Z)-eicosatetraenoate + UDP + H(+). The catalysed reaction is prostaglandin B1 + UDP-alpha-D-glucuronate = 15-O-(beta-D-glucuronosyl)-prostaglandin B1 + UDP + H(+). The enzyme catalyses (E)-ferulate + UDP-alpha-D-glucuronate = (E)-4-O-(beta-D-glucuronosyl)-ferulate + UDP + H(+). It carries out the reaction (E)-ferulate + UDP-alpha-D-glucuronate = (E)-ferulic acid beta-D-glucuronate ester + UDP. It catalyses the reaction losartan + UDP-alpha-D-glucuronate = losartan-2-N-beta-D-glucuronide + UDP. The catalysed reaction is candesartan + UDP-alpha-D-glucuronate = candesartan O-beta-D-glucuronoside + UDP. The enzyme catalyses candesartan + UDP-alpha-D-glucuronate = candesartan-2-N-beta-D-glucuronide + UDP. It carries out the reaction zolasartan + UDP-alpha-D-glucuronate = zolarsartan-1-N-beta-D-glucuronide + UDP. In terms of biological role, UDP-glucuronosyltransferase (UGT) that catalyzes phase II biotransformation reactions in which lipophilic substrates are conjugated with glucuronic acid to increase the metabolite's water solubility, thereby facilitating excretion into either the urine or bile. Essential for the elimination and detoxification of drugs, xenobiotics and endogenous compounds. Catalyzes the glucuronidation of endogenous estrogen hormones such as estradiol, estrone and estriol. Involved in the glucuronidation of arachidonic acid (AA) and AA-derived eicosanoids including 15-HETE and PGB1. Involved in the glucuronidation of the phytochemical ferulic acid at the phenolic or the carboxylic acid group. Also catalyzes the glucuronidation of the isoflavones genistein, daidzein, glycitein, formononetin, biochanin A and prunetin, which are phytoestrogens with anticancer and cardiovascular properties. Involved in the glucuronidation of the AGTR1 angiotensin receptor antagonist losartan, caderastan and zolarsatan, drugs which can inhibit the effect of angiotensin II. Functionally, lacks UGT glucuronidation activity but acts as a negative regulator of isoform 1. In Homo sapiens (Human), this protein is UDP-glucuronosyltransferase 1A10.